The primary structure comprises 353 residues: Photosystem II protein D1 (353 aa).

The residue at position 2 (threonine 2) is an N-acetylthreonine. A Phosphothreonine modification is found at threonine 2. Transmembrane regions (helical) follow at residues 29 to 46 (YIGW…TATS), 118 to 133 (HFLL…EWEL), and 142 to 156 (WIAV…AATA). Histidine 118 serves as a coordination point for chlorophyll a. Tyrosine 126 contacts pheophytin a. Aspartate 170 and glutamate 189 together coordinate [CaMn4O5] cluster. Residues 197 to 218 (FHMLGVAGVFGGSLFSAMHGSL) traverse the membrane as a helical segment. Residue histidine 198 participates in chlorophyll a binding. Residues histidine 215 and 264–265 (SF) contribute to the a quinone site. Histidine 215 serves as a coordination point for Fe cation. Histidine 272 serves as a coordination point for Fe cation. The helical transmembrane segment at 274–288 (FLAAWPVVGIWFTAL) threads the bilayer. The [CaMn4O5] cluster site is built by histidine 332, glutamate 333, aspartate 342, and alanine 344. A propeptide spanning residues 345–353 (AVEVPSING) is cleaved from the precursor.

This sequence belongs to the reaction center PufL/M/PsbA/D family. PSII is composed of 1 copy each of membrane proteins PsbA, PsbB, PsbC, PsbD, PsbE, PsbF, PsbH, PsbI, PsbJ, PsbK, PsbL, PsbM, PsbT, PsbX, PsbY, PsbZ, Psb30/Ycf12, at least 3 peripheral proteins of the oxygen-evolving complex and a large number of cofactors. It forms dimeric complexes. The cofactor is The D1/D2 heterodimer binds P680, chlorophylls that are the primary electron donor of PSII, and subsequent electron acceptors. It shares a non-heme iron and each subunit binds pheophytin, quinone, additional chlorophylls, carotenoids and lipids. D1 provides most of the ligands for the Mn4-Ca-O5 cluster of the oxygen-evolving complex (OEC). There is also a Cl(-1) ion associated with D1 and D2, which is required for oxygen evolution. The PSII complex binds additional chlorophylls, carotenoids and specific lipids.. Post-translationally, tyr-161 forms a radical intermediate that is referred to as redox-active TyrZ, YZ or Y-Z. C-terminally processed by CTPA; processing is essential to allow assembly of the oxygen-evolving complex and thus photosynthetic growth.

Its subcellular location is the plastid. It localises to the chloroplast thylakoid membrane. It carries out the reaction 2 a plastoquinone + 4 hnu + 2 H2O = 2 a plastoquinol + O2. Photosystem II (PSII) is a light-driven water:plastoquinone oxidoreductase that uses light energy to abstract electrons from H(2)O, generating O(2) and a proton gradient subsequently used for ATP formation. It consists of a core antenna complex that captures photons, and an electron transfer chain that converts photonic excitation into a charge separation. The D1/D2 (PsbA/PsbD) reaction center heterodimer binds P680, the primary electron donor of PSII as well as several subsequent electron acceptors. This chain is Photosystem II protein D1, found in Triticum aestivum (Wheat).